The chain runs to 271 residues: Protein PXR1 (271 aa).

The 48-residue stretch at 25–72 (TSRFGHQFLEKFGWKPGMGLGLSPMNSNTSHIKVSIKDDNVGLGAKLK) folds into the G-patch domain. Residues 147–239 (SNAKKRKREG…SASNIPDAVN (93 aa)) are disordered. The segment covering 157-168 (DDSEDEDDDDKE) has biased composition (acidic residues). A compositionally biased stretch (basic residues) spans 175–203 (KKHKKHKKHKKDKKKDKKDKKEHKKHKKE). Residues 204 to 221 (EKRLKKEKRAEKTKETKK) show a composition bias toward basic and acidic residues. S230 bears the Phosphoserine mark.

The protein belongs to the PINX1 family. In terms of assembly, interacts with EST2.

It localises to the nucleus. The protein localises to the nucleolus. Functionally, involved in rRNA-processing at A0, A1 and A2 sites through its action in U18 and U24 snoRNA 3'-end final trimming. Negative regulator of telomerase through competition for binding to EST2 with TLC1. This Saccharomyces cerevisiae (strain ATCC 204508 / S288c) (Baker's yeast) protein is Protein PXR1 (PXR1).